The sequence spans 419 residues: MSVQLDPSALQKMAEVAAAAEQQSNEPMTVDEEYELWKSNVPMLYDFVSETRLTWPTLTVEWLPQKNLVAARTRQQLILGTHTSGEEQNYLKIGAVDLPVEVTENSKKDREIDEEDEDMVLSNVKIVKKFPHDGEITRARYMPQDDNIIATINGEGKIFIYDRSKNGVEALLSTLEYHTENGYGLAFNANEKYSLLSGSDDSNIALWDISNFEKNIKPTITFEDAHTDIINDVKWHSSEAHIFGSVSEDSTMKLFDKRSSQIIHNINTKKPYNTLAFSPFSSNLFAAAGTDNLVYLYDIRDVSNPLYAMTGHEDAVTAIEFDPNNDGILYSSGSDRRTIVWDLQEIGAEQTQDEIEDGPPEVLMIHAGHKTSINDIAVNPNINWLVASAEEDNIVQIWKCSSNIPRIGGEPEVDLSILD.

5 WD repeats span residues 131 to 171 (PHDG…VEAL), 177 to 217 (YHTE…KNIK), 225 to 265 (AHTD…IIHN), 267 to 307 (NTKK…NPLY), and 311 to 351 (GHED…AEQT). Residues 353 to 357 (DEIED) are interaction with the histone H4 N-terminus. The WD 6 repeat unit spans residues 368–408 (GHKTSINDIAVNPNINWLVASAEEDNIVQIWKCSSNIPRIG).

It belongs to the WD repeat RBAP46/RBAP48/MSI1 family. As to quaternary structure, component of the HAT-B complex composed of at least HAT1 and HAT2. The HAT-B complex binds to histone H4 tail.

It is found in the cytoplasm. It localises to the nucleus. Functionally, regulatory subunit of the histone acetylase B (HAT-B) complex. The complex acetylates Lys-12 of histone H4 which is required for telomeric silencing. The sequence is that of Histone acetyltransferase type B subunit 2 (HAT2) from Candida glabrata (strain ATCC 2001 / BCRC 20586 / JCM 3761 / NBRC 0622 / NRRL Y-65 / CBS 138) (Yeast).